The primary structure comprises 394 residues: uncharacterized protein (394 aa).

N-linked (GlcNAc...) asparagine glycosylation is found at Asn-3, Asn-14, Asn-20, and Asn-25. Helical transmembrane passes span 64–84, 101–121, 133–153, 180–200, 228–248, and 256–276; these read AVGI…LVNI, FIWI…YIDV, IFSF…WHVI, IFVV…MGFF, VLLA…SFVY, and WVGM…QFLE. Asn-283 and Asn-286 each carry an N-linked (GlcNAc...) asparagine glycan. The chain crosses the membrane as a helical span at residues 291 to 311; it reads AGLVFGLGFCPPLILAYTVCI. Residue Asn-344 is glycosylated (N-linked (GlcNAc...) asparagine).

The protein localises to the membrane. This is an uncharacterized protein from Schizosaccharomyces pombe (strain 972 / ATCC 24843) (Fission yeast).